A 238-amino-acid chain; its full sequence is Uridylate kinase (238 aa).

12 to 15 (KLSG) lines the ATP pocket. UMP is bound at residue glycine 54. The ATP site is built by glycine 55 and arginine 59. UMP-binding positions include aspartate 74 and 135–142 (TGNPFFTT). Residues threonine 162, asparagine 163, tyrosine 168, and aspartate 171 each coordinate ATP.

Belongs to the UMP kinase family. As to quaternary structure, homohexamer.

It is found in the cytoplasm. The catalysed reaction is UMP + ATP = UDP + ADP. The protein operates within pyrimidine metabolism; CTP biosynthesis via de novo pathway; UDP from UMP (UMPK route): step 1/1. With respect to regulation, inhibited by UTP. Its function is as follows. Catalyzes the reversible phosphorylation of UMP to UDP. The sequence is that of Uridylate kinase from Rhodopseudomonas palustris (strain BisB18).